The sequence spans 287 residues: Bifunctional protein FolD (287 aa).

NADP(+) contacts are provided by residues 168-170, Ser-193, and Ile-234; that span reads GRS.

This sequence belongs to the tetrahydrofolate dehydrogenase/cyclohydrolase family. Homodimer.

The enzyme catalyses (6R)-5,10-methylene-5,6,7,8-tetrahydrofolate + NADP(+) = (6R)-5,10-methenyltetrahydrofolate + NADPH. The catalysed reaction is (6R)-5,10-methenyltetrahydrofolate + H2O = (6R)-10-formyltetrahydrofolate + H(+). It functions in the pathway one-carbon metabolism; tetrahydrofolate interconversion. Catalyzes the oxidation of 5,10-methylenetetrahydrofolate to 5,10-methenyltetrahydrofolate and then the hydrolysis of 5,10-methenyltetrahydrofolate to 10-formyltetrahydrofolate. The chain is Bifunctional protein FolD from Clostridioides difficile (strain 630) (Peptoclostridium difficile).